Consider the following 262-residue polypeptide: Hydroxyethylthiazole kinase (262 aa).

M50 contributes to the substrate binding site. Positions 125 and 171 each coordinate ATP. G198 contributes to the substrate binding site.

The protein belongs to the Thz kinase family. It depends on Mg(2+) as a cofactor.

The enzyme catalyses 5-(2-hydroxyethyl)-4-methylthiazole + ATP = 4-methyl-5-(2-phosphooxyethyl)-thiazole + ADP + H(+). It functions in the pathway cofactor biosynthesis; thiamine diphosphate biosynthesis; 4-methyl-5-(2-phosphoethyl)-thiazole from 5-(2-hydroxyethyl)-4-methylthiazole: step 1/1. Its function is as follows. Catalyzes the phosphorylation of the hydroxyl group of 4-methyl-5-beta-hydroxyethylthiazole (THZ). This is Hydroxyethylthiazole kinase from Escherichia coli (strain 55989 / EAEC).